A 147-amino-acid polypeptide reads, in one-letter code: uncharacterized protein (147 aa).

This is an uncharacterized protein from Caenorhabditis elegans.